Reading from the N-terminus, the 336-residue chain is Urokinase plasminogen activator surface receptor (336 aa).

The first 23 residues, 1 to 23, serve as a signal peptide directing secretion; it reads MGHPLLLPLLLLLLHTGVPASWG. 3 UPAR/Ly6 domains span residues 24-111, 116-208, and 215-302; these read LRCM…VTFP, LECI…LSLA, and HRCY…EDIQ. Intrachain disulfides connect cysteine 26–cysteine 47, cysteine 29–cysteine 35, and cysteine 40–cysteine 68. A glycan (N-linked (GlcNAc...) asparagine) is linked at asparagine 75. 11 cysteine pairs are disulfide-bonded: cysteine 94-cysteine 99, cysteine 118-cysteine 145, cysteine 121-cysteine 128, cysteine 138-cysteine 170, cysteine 176-cysteine 193, cysteine 194-cysteine 199, cysteine 217-cysteine 245, cysteine 220-cysteine 228, cysteine 238-cysteine 264, cysteine 270-cysteine 288, and cysteine 289-cysteine 294. 2 N-linked (GlcNAc...) asparagine glycosylation sites follow: asparagine 195 and asparagine 223.

Monomer. Interacts (via the UPAR/Ly6 domains) with SRPX2. Interacts with MRC2. Interacts with FAP (seprase); the interaction occurs at the cell surface of invadopodia membrane. Interacts with SORL1 (via N-terminal ectodomain); this interaction decreases PLAUR internalization. The ternary complex composed of PLAUR-PLAU-SERPINE1 also interacts with SORL1.

The protein resides in the cell membrane. It localises to the cell projection. It is found in the invadopodium membrane. In terms of biological role, acts as a receptor for urokinase plasminogen activator. Plays a role in localizing and promoting plasmin formation. Mediates the proteolysis-independent signal transduction activation effects of U-PA. It is subject to negative-feedback regulation by U-PA which cleaves it into an inactive form. The chain is Urokinase plasminogen activator surface receptor (PLAUR) from Aotus trivirgatus (Three-striped night monkey).